A 339-amino-acid chain; its full sequence is MIDQKIFETTLNIDDPTNFCTNVEAHLLKELENIYVGKCFKNSFILNITGIIQRSPCFIMRTNNSGRGYMHVRFSALVSYLNAFDLIAAVKIIKNDSNIILGESLLTEPVTIVIPSSESQNNVAEVGQIVPVQLANSSVYYIPGRQQASATGSIFIPKHTFSVYHVQEELTQEQALNLTKLVNIIEMLLESRSKKDFKQICFFEKLYYTYSISSDEILDLKIWKGPKGKEMSRLKPCNVLSFLYDALKNKSSSLGFWARPPNLFKSSPLAYQQDQNSFNATELPIICSAEVMFVTLLKEIINYLQFMNDLCDTFNNEQLIKRHENIWMLIEQRKIGHDF.

It belongs to the asfivirus D339L family. In terms of assembly, part of the viral DNA-directed RNA polymerase that consists of 8 polII-like subunits (RPB1, RPB2, RPB3, RPB5, RPB6, RPB7, RPB9, RPB10), a capping enzyme and a termination factor.

It is found in the host cytoplasm. It localises to the virion. Component of the DNA-directed RNA polymerase (RNAP) that catalyzes the transcription in the cytoplasm of viral DNA into RNA using the four ribonucleoside triphosphates as substrates. This is DNA-directed RNA polymerase RPB7 homolog from Ornithodoros (relapsing fever ticks).